A 396-amino-acid polypeptide reads, in one-letter code: Zinc metalloproteinase nas-24 (396 aa).

Residues 1–20 (MTRVVHIIGAAFLLSSYAYC) form the signal peptide. A Peptidase M12A domain is found at 44–230 (ERLGSKWLGG…YKINQYYGCG (187 aa)). N-linked (GlcNAc...) asparagine glycosylation is found at Asn-63 and Asn-79. Intrachain disulfides connect Cys-82/Cys-229, Cys-105/Cys-129, Cys-231/Cys-251, and Cys-253/Cys-262. His-137 is a Zn(2+) binding site. Glu-138 is an active-site residue. Residues His-141 and His-147 each contribute to the Zn(2+) site. An EGF-like domain is found at 224–263 (NQYYGCGCSTQLECKNGGYTSPSDCSRCNCPKGFFGKLCN). The N-linked (GlcNAc...) asparagine glycan is linked to Asn-310.

Requires Zn(2+) as cofactor.

It is found in the secreted. Metalloprotease. The protein is Zinc metalloproteinase nas-24 (nas-24) of Caenorhabditis elegans.